The primary structure comprises 143 residues: Transcriptional regulator MraZ (143 aa).

SpoVT-AbrB domains follow at residues E5–E47 and A76–Q119.

It belongs to the MraZ family. As to quaternary structure, forms oligomers.

The protein localises to the cytoplasm. It localises to the nucleoid. The chain is Transcriptional regulator MraZ from Alkaliphilus metalliredigens (strain QYMF).